Here is a 484-residue protein sequence, read N- to C-terminus: Replication factor C large subunit (484 aa).

46-53 (GPPGSGKT) contacts ATP. The segment covering 463–478 (NADTKEKEKKDPKKQA) has biased composition (basic and acidic residues). The tract at residues 463-484 (NADTKEKEKKDPKKQATLDSFF) is disordered.

This sequence belongs to the activator 1 small subunits family. RfcL subfamily. Heteromultimer composed of small subunits (RfcS) and large subunits (RfcL).

Functionally, part of the RFC clamp loader complex which loads the PCNA sliding clamp onto DNA. This Methanococcus maripaludis (strain C6 / ATCC BAA-1332) protein is Replication factor C large subunit.